An 89-amino-acid polypeptide reads, in one-letter code: MSLSTEAKAKILAEFGRGENDTGSTEVQVALLTAQINHLQDHFKTHIHDHHSRRGLLRMVSSRRKLLSYLQRTENERYNALIQKLGLRR.

It belongs to the universal ribosomal protein uS15 family. As to quaternary structure, part of the 30S ribosomal subunit. Forms a bridge to the 50S subunit in the 70S ribosome, contacting the 23S rRNA.

One of the primary rRNA binding proteins, it binds directly to 16S rRNA where it helps nucleate assembly of the platform of the 30S subunit by binding and bridging several RNA helices of the 16S rRNA. Its function is as follows. Forms an intersubunit bridge (bridge B4) with the 23S rRNA of the 50S subunit in the ribosome. In Shewanella amazonensis (strain ATCC BAA-1098 / SB2B), this protein is Small ribosomal subunit protein uS15.